A 464-amino-acid polypeptide reads, in one-letter code: NADH-ubiquinone oxidoreductase chain 4 (464 aa).

Transmembrane regions (helical) follow at residues 18 to 38 (LLPT…VLPT), 54 to 74 (IADI…IANW), 79 to 99 (SLLY…NFMC), 102 to 122 (MLSF…LIGL), 131 to 151 (AADY…LAIG), 168 to 188 (VVLS…GIMV), 207 to 227 (PLAG…YAII), 239 to 259 (VLYT…TSII), 266 to 286 (LKVI…LGIL), 297 to 317 (LILS…VGGI), 332 to 352 (GLLT…FSNI), 375 to 395 (TILG…MLKV), and 420 to 440 (LLMI…NGII).

Belongs to the complex I subunit 4 family.

It localises to the mitochondrion membrane. It carries out the reaction a ubiquinone + NADH + 5 H(+)(in) = a ubiquinol + NAD(+) + 4 H(+)(out). Functionally, core subunit of the mitochondrial membrane respiratory chain NADH dehydrogenase (Complex I) that is believed to belong to the minimal assembly required for catalysis. Complex I functions in the transfer of electrons from NADH to the respiratory chain. The immediate electron acceptor for the enzyme is believed to be ubiquinone. The polypeptide is NADH-ubiquinone oxidoreductase chain 4 (NAD4) (Candida albicans (strain SC5314 / ATCC MYA-2876) (Yeast)).